Reading from the N-terminus, the 403-residue chain is Eukaryotic initiation factor 4A (403 aa).

A disordered region spans residues methionine 1 to valine 20. The Q motif signature appears at aspartate 30–glutamine 58. Residues isoleucine 61–isoleucine 231 enclose the Helicase ATP-binding domain. Residue alanine 74–threonine 81 participates in ATP binding. Positions aspartate 179–aspartate 182 match the DEAD box motif. The region spanning glycine 242–isoleucine 403 is the Helicase C-terminal domain.

It belongs to the DEAD box helicase family. eIF4A subfamily. As to quaternary structure, eIF4F is a multi-subunit complex, the composition of which varies with external and internal environmental conditions. It is composed of at least eIF4A, eIF4E1 and eIF4G1. Interacts with tud and vas. Interacts (via multiple contacts) with bam; the interaction is direct.

It is found in the cytoplasm. It localises to the cytoplasmic ribonucleoprotein granule. It carries out the reaction ATP + H2O = ADP + phosphate + H(+). In terms of biological role, ATP-dependent RNA helicase which is a subunit of the eIF4F complex involved in cap recognition and is required for mRNA binding to ribosome. In the current model of translation initiation, eIF4A unwinds RNA secondary structures in the 5'-UTR of mRNAs which is necessary to allow efficient binding of the small ribosomal subunit, and subsequent scanning for the initiator codon. As a result, promotes cell proliferation and growth. Binds and antagonises the bam-bgcn complex; probably prevents bam mediated translational repression of shg/E-cadherin. Involved in germ cell formation. Involved in germline stem cell maintenance and proliferation; prevents differentiation. The polypeptide is Eukaryotic initiation factor 4A (Drosophila melanogaster (Fruit fly)).